A 296-amino-acid polypeptide reads, in one-letter code: uncharacterized protein (296 aa).

The chain crosses the membrane as a helical span at residues 1–21; it reads MIFAVVDILEISIQLLCILLF.

It localises to the membrane. This is an uncharacterized protein from Caenorhabditis elegans.